The following is a 302-amino-acid chain: N-acetylmuramic acid 6-phosphate etherase (302 aa).

Residues 58-221 form the SIS domain; sequence IGEAFLNGGR…STGAMVKTGK (164 aa). Glu86 acts as the Proton donor in catalysis. Glu117 is an active-site residue.

It belongs to the GCKR-like family. MurNAc-6-P etherase subfamily. As to quaternary structure, homodimer.

It carries out the reaction N-acetyl-D-muramate 6-phosphate + H2O = N-acetyl-D-glucosamine 6-phosphate + (R)-lactate. It functions in the pathway amino-sugar metabolism; N-acetylmuramate degradation. In terms of biological role, specifically catalyzes the cleavage of the D-lactyl ether substituent of MurNAc 6-phosphate, producing GlcNAc 6-phosphate and D-lactate. This is N-acetylmuramic acid 6-phosphate etherase from Clostridium botulinum (strain Hall / ATCC 3502 / NCTC 13319 / Type A).